We begin with the raw amino-acid sequence, 93 residues long: MANTKSAIKRIKISERNRIRNRIRLGKIKFYTKQFLKLLEENKIEEAKKVLPEVISAIDKAAQKGTLHKNTAARKKSKLMRLLNQKLSANLSS.

The protein belongs to the bacterial ribosomal protein bS20 family.

Binds directly to 16S ribosomal RNA. This Dictyoglomus thermophilum (strain ATCC 35947 / DSM 3960 / H-6-12) protein is Small ribosomal subunit protein bS20.